Reading from the N-terminus, the 432-residue chain is Gamma-glutamyl phosphate reductase (432 aa).

This sequence belongs to the gamma-glutamyl phosphate reductase family.

It localises to the cytoplasm. It catalyses the reaction L-glutamate 5-semialdehyde + phosphate + NADP(+) = L-glutamyl 5-phosphate + NADPH + H(+). The protein operates within amino-acid biosynthesis; L-proline biosynthesis; L-glutamate 5-semialdehyde from L-glutamate: step 2/2. Catalyzes the NADPH-dependent reduction of L-glutamate 5-phosphate into L-glutamate 5-semialdehyde and phosphate. The product spontaneously undergoes cyclization to form 1-pyrroline-5-carboxylate. The polypeptide is Gamma-glutamyl phosphate reductase (Deinococcus radiodurans (strain ATCC 13939 / DSM 20539 / JCM 16871 / CCUG 27074 / LMG 4051 / NBRC 15346 / NCIMB 9279 / VKM B-1422 / R1)).